We begin with the raw amino-acid sequence, 143 residues long: Crossover junction endodeoxyribonuclease Hjc (143 aa).

Glu11 contributes to the Mg(2+) binding site. The active site involves Ser31. Mg(2+) contacts are provided by Asp41 and Glu54.

This sequence belongs to the Holliday junction resolvase Hjc family. Homodimer. The cofactor is Mg(2+).

The catalysed reaction is Endonucleolytic cleavage at a junction such as a reciprocal single-stranded crossover between two homologous DNA duplexes (Holliday junction).. A structure-specific endonuclease that resolves Holliday junction (HJ) intermediates during genetic recombination. Cleaves 4-way DNA junctions introducing paired nicks in opposing strands, leaving a 5'-terminal phosphate and a 3'-terminal hydroxyl group that are ligated to produce recombinant products. Its function is as follows. Redundant function with Holliday junction resolvase Hje. The polypeptide is Crossover junction endodeoxyribonuclease Hjc (Sulfolobus acidocaldarius (strain ATCC 33909 / DSM 639 / JCM 8929 / NBRC 15157 / NCIMB 11770)).